Consider the following 382-residue polypeptide: Flap endonuclease 1 (382 aa).

Residues 1-104 (MGIKGLSQVI…GELEKRSERR (104 aa)) are N-domain. Mg(2+) is bound at residue aspartate 34. DNA-binding residues include arginine 47 and arginine 70. Mg(2+) contacts are provided by aspartate 86, glutamate 158, glutamate 160, aspartate 179, and aspartate 181. The tract at residues 122–253 (EAEKFERRLV…KKAVELIRQH (132 aa)) is I-domain. Position 158 (glutamate 158) interacts with DNA. Glycine 231 and aspartate 233 together coordinate DNA. Aspartate 233 is a Mg(2+) binding site. The interval 336-344 (TQGRIDSFF) is interaction with PCNA. Positions 358–382 (KRKAEEAEKAKKGAKKGGPPKKRAK) are disordered. Over residues 359–368 (RKAEEAEKAK) the composition is skewed to basic and acidic residues. The span at 369–382 (KGAKKGGPPKKRAK) shows a compositional bias: basic residues.

The protein belongs to the XPG/RAD2 endonuclease family. FEN1 subfamily. As to quaternary structure, interacts with PCNA. Three molecules of crn-1 bind to one PCNA trimer with each molecule binding to one PCNA monomer. PCNA stimulates the nuclease activity without altering cleavage specificity. Interacts with cps-6. Requires Mg(2+) as cofactor. Phosphorylated. Phosphorylation upon DNA damage induces relocalization to the nuclear plasma.

It localises to the nucleus. Its subcellular location is the nucleolus. The protein localises to the nucleoplasm. It is found in the mitochondrion. Its function is as follows. Structure-specific nuclease with 5'-flap endonuclease and 5'-3' exonuclease activities involved in DNA replication and repair. During DNA replication, cleaves the 5'-overhanging flap structure that is generated by displacement synthesis when DNA polymerase encounters the 5'-end of a downstream Okazaki fragment. It enters the flap from the 5'-end and then tracks to cleave the flap base, leaving a nick for ligation. Also involved in the long patch base excision repair (LP-BER) pathway, by cleaving within the apurinic/apyrimidinic (AP) site-terminated flap. Acts as a genome stabilization factor that prevents flaps from equilibrating into structures that lead to duplications and deletions. Also possesses 5'-3' exonuclease activity on nicked or gapped double-stranded DNA, and exhibits RNase H activity. Also involved in replication and repair of rDNA and in repairing mitochondrial DNA. Can associate and cooperate with cps-6 to promote stepwise DNA fragmentation, utilizing the endonuclease activity of cps-6 and both of its own 5'-3' exonuclease activity and gap-dependent endonuclease activity. May play a critical role in switching the state of cells from DNA replication/repair to DNA degradation during apoptosis. This chain is Flap endonuclease 1, found in Caenorhabditis elegans.